A 100-amino-acid chain; its full sequence is Small ribosomal subunit protein bS20 (100 aa).

The protein belongs to the bacterial ribosomal protein bS20 family.

In terms of biological role, binds directly to 16S ribosomal RNA. The sequence is that of Small ribosomal subunit protein bS20 from Synechococcus sp. (strain JA-3-3Ab) (Cyanobacteria bacterium Yellowstone A-Prime).